We begin with the raw amino-acid sequence, 332 residues long: tRNA dimethylallyltransferase (332 aa).

17–24 provides a ligand contact to ATP; the sequence is GPTCSGKS. 19–24 is a binding site for substrate; that stretch reads TCSGKS. Interaction with substrate tRNA regions lie at residues 42–45 and 166–170; these read DSMQ and QRVAR.

It belongs to the IPP transferase family. As to quaternary structure, monomer. Requires Mg(2+) as cofactor.

The catalysed reaction is adenosine(37) in tRNA + dimethylallyl diphosphate = N(6)-dimethylallyladenosine(37) in tRNA + diphosphate. Functionally, catalyzes the transfer of a dimethylallyl group onto the adenine at position 37 in tRNAs that read codons beginning with uridine, leading to the formation of N6-(dimethylallyl)adenosine (i(6)A). This Gluconacetobacter diazotrophicus (strain ATCC 49037 / DSM 5601 / CCUG 37298 / CIP 103539 / LMG 7603 / PAl5) protein is tRNA dimethylallyltransferase.